A 146-amino-acid chain; its full sequence is 3-dehydroquinate dehydratase (146 aa).

Tyr23 (proton acceptor) is an active-site residue. Substrate is bound by residues Asn74, His80, and Asp87. Catalysis depends on His100, which acts as the Proton donor. Substrate-binding positions include 101–102 (IS) and Arg111.

It belongs to the type-II 3-dehydroquinase family. Homododecamer.

It catalyses the reaction 3-dehydroquinate = 3-dehydroshikimate + H2O. It participates in metabolic intermediate biosynthesis; chorismate biosynthesis; chorismate from D-erythrose 4-phosphate and phosphoenolpyruvate: step 3/7. Catalyzes a trans-dehydration via an enolate intermediate. This Bacillus mycoides (strain KBAB4) (Bacillus weihenstephanensis) protein is 3-dehydroquinate dehydratase.